A 465-amino-acid chain; its full sequence is Kinesin-like protein KIN-1 (465 aa).

In terms of domain architecture, Kinesin motor spans 3-334; the sequence is NVTVCARFRP…LRFGMRAKHI (332 aa). 87 to 94 is an ATP binding site; sequence GQTGAGKT. The interval 338–358 is disordered; sequence PRASEVKSAKAQEEPSSVTKD. Over residues 341-358 the composition is skewed to basic and acidic residues; the sequence is SEVKSAKAQEEPSSVTKD. Residues 402-444 adopt a coiled-coil conformation; it reads VYEDIVSKTIQSLQQAVDELQQKVKKLEAENIGIQEQALRNHE.

It belongs to the TRAFAC class myosin-kinesin ATPase superfamily. Kinesin family. KIN-1 subfamily. As to quaternary structure, homodimer. Interacts with WIP1 and WIP2. Specifically expressed in ovules and anthers.

Functionally, kinesin-like motor protein that promotes synapsis and is required for proper crossover distribution in meiosis. Plays a role in the nuclear division cycles during megagametogenesis. The protein is Kinesin-like protein KIN-1 of Arabidopsis thaliana (Mouse-ear cress).